The sequence spans 161 residues: MPVLEIDLLDETNKLLDEDKQLVENILQFAAGYLKIDEGTELSLTFTTNEGIREINREYRNKDQATDVISFALEEMGEGETEIDWADFDLETPKMLGDIIISTEKAEEQAKDYGHTKARELGFLAVHGLLHLLGYDHMEPDEEKIMFGLQKEVLDAYGLER.

Residues histidine 127, histidine 131, and histidine 137 each coordinate Zn(2+).

It belongs to the endoribonuclease YbeY family. It depends on Zn(2+) as a cofactor.

The protein localises to the cytoplasm. In terms of biological role, single strand-specific metallo-endoribonuclease involved in late-stage 70S ribosome quality control and in maturation of the 3' terminus of the 16S rRNA. This chain is Endoribonuclease YbeY, found in Listeria welshimeri serovar 6b (strain ATCC 35897 / DSM 20650 / CCUG 15529 / CIP 8149 / NCTC 11857 / SLCC 5334 / V8).